A 434-amino-acid polypeptide reads, in one-letter code: Glutamyl-tRNA reductase (434 aa).

Residues 54-57 (TCNR), serine 113, 118-120 (EAQ), and glutamine 124 contribute to the substrate site. Catalysis depends on cysteine 55, which acts as the Nucleophile. 193 to 198 (GGGEVS) provides a ligand contact to NADP(+).

The protein belongs to the glutamyl-tRNA reductase family. In terms of assembly, homodimer.

The enzyme catalyses (S)-4-amino-5-oxopentanoate + tRNA(Glu) + NADP(+) = L-glutamyl-tRNA(Glu) + NADPH + H(+). The protein operates within porphyrin-containing compound metabolism; protoporphyrin-IX biosynthesis; 5-aminolevulinate from L-glutamyl-tRNA(Glu): step 1/2. It participates in porphyrin-containing compound metabolism; chlorophyll biosynthesis. Catalyzes the NADPH-dependent reduction of glutamyl-tRNA(Glu) to glutamate 1-semialdehyde (GSA). This chain is Glutamyl-tRNA reductase, found in Chloroflexus aurantiacus (strain ATCC 29366 / DSM 635 / J-10-fl).